Here is a 158-residue protein sequence, read N- to C-terminus: Probable transcription regulator ArfM (158 aa).

In terms of biological role, activates, in anaerobic conditions, the transcription of the fermentative operons lctEP and alsDS, of the hmp gene encoding a flavohemoglobin-like protein, the nitrite reductase operon nasDE and the heme biosynthesis genes hemN and hemZ. The protein is Probable transcription regulator ArfM (arfM) of Bacillus subtilis (strain 168).